The sequence spans 324 residues: PTS system glucose-specific EIICBA component (324 aa).

The region spanning 1–63 is the PTS EIIC type-1 domain; it reads HLLNVKIGMT…KWDLATPGRE (63 aa). 2 helical membrane-spanning segments follow: residues 5-25 and 28-48; these read VKIG…GVLP and TAWW…YFGF. The region spanning 78 to 159 is the PTS EIIB type-1 domain; sequence GDLPYEVLAA…QDIMQGKAPA (82 aa). The Phosphocysteine intermediate; for EIIB activity role is filled by Cys100. A disordered region spans residues 156 to 177; that stretch reads KAPARAEEKPKTAASEAAESET. Low complexity predominate over residues 167–177; the sequence is TAASEAAESET. The 105-residue stretch at 194-298 folds into the PTS EIIA type-1 domain; that stretch reads DQVFSQKMMG…SIVTPVIFTN (105 aa). His246 functions as the Tele-phosphohistidine intermediate; for EIIA activity in the catalytic mechanism.

The protein localises to the cell membrane. It catalyses the reaction N(pros)-phospho-L-histidyl-[protein] + D-glucose(out) = D-glucose 6-phosphate(in) + L-histidyl-[protein]. The phosphoenolpyruvate-dependent sugar phosphotransferase system (sugar PTS), a major carbohydrate active transport system, catalyzes the phosphorylation of incoming sugar substrates concomitantly with their translocation across the cell membrane. This system is involved in glucose transport. The sequence is that of PTS system glucose-specific EIICBA component (ptsG) from Geobacillus stearothermophilus (Bacillus stearothermophilus).